We begin with the raw amino-acid sequence, 601 residues long: Glutamyl-tRNA(Gln) amidotransferase subunit B, mitochondrial (601 aa).

The transit peptide at 1 to 55 directs the protein to the mitochondrion; that stretch reads MLRPWLRQCPRATRSLACPQCHLPRPQTARRALRPLPALSLSHPIRSLQTTTTES.

The protein belongs to the GatB/GatE family. GatB subfamily. Subunit of the heterotrimeric GatCAB amidotransferase (AdT) complex, composed of A, B and C subunits.

The protein resides in the mitochondrion. It catalyses the reaction L-glutamyl-tRNA(Gln) + L-glutamine + ATP + H2O = L-glutaminyl-tRNA(Gln) + L-glutamate + ADP + phosphate + H(+). Its function is as follows. Allows the formation of correctly charged Gln-tRNA(Gln) through the transamidation of misacylated Glu-tRNA(Gln) in the mitochondria. The reaction takes place in the presence of glutamine and ATP through an activated gamma-phospho-Glu-tRNA(Gln). The sequence is that of Glutamyl-tRNA(Gln) amidotransferase subunit B, mitochondrial from Aspergillus niger (strain ATCC MYA-4892 / CBS 513.88 / FGSC A1513).